Reading from the N-terminus, the 290-residue chain is Homeobox protein HMX3-B (290 aa).

2 disordered regions span residues 1–41 and 96–169; these read MADS…GSSK and EKVN…KKKT. Basic and acidic residues predominate over residues 107-124; the sequence is LDRHTPDPPKSDQESKEE. Positions 125–137 are enriched in acidic residues; it reads SADDEIALEESDA. The segment covering 138 to 162 has biased composition (basic and acidic residues); sequence EEPKKETDQEDDWMRKGEDLESDKK. The segment at residues 166-225 is a DNA-binding region (homeobox); that stretch reads KKKTRTVFSRSQVFQLESTFDIKRYLSSSERAGLAASLHLTETQVKIWFQNRRNKWKRQL.

It belongs to the HMX homeobox family. Expressed in the ear placode and vesicle and in cells forming the vestibulo-acoustic ganglion.

It is found in the nucleus. Its function is as follows. Transcription factor involved in specification of neuronal cell types and which is required for inner ear and hypothalamus development. Binds to the 5'-CAAGTG-3' core sequence. In Oryzias latipes (Japanese rice fish), this protein is Homeobox protein HMX3-B (hmx3b).